Reading from the N-terminus, the 415-residue chain is Mitogen-activated protein kinase MPS1 (415 aa).

In terms of domain architecture, Protein kinase spans 23–314 (YTVTKELGQG…VEQALEHPYL (292 aa)). ATP contacts are provided by residues 29–37 (LGQGAYGIV) and K52. A disordered region spans residues 363 to 394 (GAGGHGAPHAPQVPIPAGAGQGQWKAEDPRPQ).

This sequence belongs to the protein kinase superfamily. Ser/Thr protein kinase family. MAP kinase subfamily. In terms of assembly, interacts with transcription factor MIG1. Interacts with transcription factor SWI6. It depends on Mg(2+) as a cofactor.

It catalyses the reaction L-seryl-[protein] + ATP = O-phospho-L-seryl-[protein] + ADP + H(+). It carries out the reaction L-threonyl-[protein] + ATP = O-phospho-L-threonyl-[protein] + ADP + H(+). Its function is as follows. Mitogen-activated protein kinase; part of the MCK1-MKK2-MPS1 MAP kinase (MAPK) signal transduction cascade that is essential for cell wall integrity and plant infection, but not for plant defense responses. Beside its role in pathogenesis, the MPS1 cascade is active in conidiation and cellular stress responses. Targets downstream of the MPS1-MAPK pathway include transcription factors MIG1 and SWI6, as well as GSK1 and MPG1. This is Mitogen-activated protein kinase MPS1 from Pyricularia oryzae (strain 70-15 / ATCC MYA-4617 / FGSC 8958) (Rice blast fungus).